Reading from the N-terminus, the 349-residue chain is DNA replication and repair protein RecF (349 aa).

30–37 (GKNGSGKT) lines the ATP pocket.

The protein belongs to the RecF family.

The protein resides in the cytoplasm. Functionally, the RecF protein is involved in DNA metabolism; it is required for DNA replication and normal SOS inducibility. RecF binds preferentially to single-stranded, linear DNA. It also seems to bind ATP. The polypeptide is DNA replication and repair protein RecF (Francisella tularensis subsp. mediasiatica (strain FSC147)).